Here is a 128-residue protein sequence, read N- to C-terminus: Probable prefoldin subunit 6 (128 aa).

This sequence belongs to the prefoldin subunit beta family. As to quaternary structure, heterohexamer of two PFD-alpha type and four PFD-beta type subunits.

The protein localises to the cytoplasm. Its function is as follows. Binds specifically to cytosolic chaperonin (c-CPN) and transfers target proteins to it. Binds to nascent polypeptide chain and promotes folding in an environment in which there are many competing pathways for nonnative proteins. Required for positioning of the mitotic spindle. The protein is Probable prefoldin subunit 6 of Caenorhabditis briggsae.